The following is a 147-amino-acid chain: Large ribosomal subunit protein uL13 (147 aa).

Belongs to the universal ribosomal protein uL13 family. As to quaternary structure, part of the 50S ribosomal subunit.

This protein is one of the early assembly proteins of the 50S ribosomal subunit, although it is not seen to bind rRNA by itself. It is important during the early stages of 50S assembly. The protein is Large ribosomal subunit protein uL13 of Paenarthrobacter aurescens (strain TC1).